The chain runs to 305 residues: Transmembrane protein 74 (305 aa).

Position 11 is a phosphoserine (S11). The segment covering 122–132 (QRSQRSPSAKG) has biased composition (polar residues). The interval 122-143 (QRSQRSPSAKGSNHPVDLGWGN) is disordered. Transmembrane regions (helical) follow at residues 178–198 (FISA…SYIV) and 232–252 (VIAG…LLMM).

The protein belongs to the TMEM74 family.

The protein localises to the lysosome membrane. It localises to the cytoplasmic vesicle. Its subcellular location is the autophagosome membrane. In terms of biological role, plays an essential role in autophagy. TMEM74-induced autophagy may involve PI3K signal transduction. The chain is Transmembrane protein 74 (Tmem74) from Mus musculus (Mouse).